The sequence spans 51 residues: Light-harvesting protein B-800/850 beta chain (51 aa).

The Cytoplasmic portion of the chain corresponds to 2-23 (ADDANKVWPSGLTTAEAEELQK). A helical transmembrane segment spans residues 24–46 (GLVDGTRVFGVIAVLAHILAYAY). A bacteriochlorophyll is bound at residue H40. The Periplasmic segment spans residues 47 to 51 (TPWLH).

It belongs to the antenna complex beta subunit family. As to quaternary structure, an alpha/beta heterodimer conjugated to 3 bacteriochlorophyll molecules. The core complex is formed by different alpha and beta chains, binding bacteriochlorophyll molecules, and arranged most probably in tetrameric structures disposed around the reaction center. The non-pigmented gamma chains may constitute additional components.

The protein localises to the cell inner membrane. Its function is as follows. Antenna complexes are light-harvesting systems, which transfer the excitation energy to the reaction centers. The chain is Light-harvesting protein B-800/850 beta chain (pucB) from Rubrivivax gelatinosus (Rhodocyclus gelatinosus).